The sequence spans 198 residues: ATP-dependent Clp protease proteolytic subunit (198 aa).

Residue Ser103 is the Nucleophile of the active site. His128 is a catalytic residue.

It belongs to the peptidase S14 family. As to quaternary structure, fourteen ClpP subunits assemble into 2 heptameric rings which stack back to back to give a disk-like structure with a central cavity, resembling the structure of eukaryotic proteasomes.

Its subcellular location is the cytoplasm. It carries out the reaction Hydrolysis of proteins to small peptides in the presence of ATP and magnesium. alpha-casein is the usual test substrate. In the absence of ATP, only oligopeptides shorter than five residues are hydrolyzed (such as succinyl-Leu-Tyr-|-NHMec, and Leu-Tyr-Leu-|-Tyr-Trp, in which cleavage of the -Tyr-|-Leu- and -Tyr-|-Trp bonds also occurs).. In terms of biological role, cleaves peptides in various proteins in a process that requires ATP hydrolysis. Has a chymotrypsin-like activity. Plays a major role in the degradation of misfolded proteins. The sequence is that of ATP-dependent Clp protease proteolytic subunit from Ruthia magnifica subsp. Calyptogena magnifica.